The sequence spans 432 residues: Tryptophan--tRNA ligase, cytoplasmic (432 aa).

The 'HIGH' region motif lies at 111–120 (PSSDSMHLGH). Positions 295 to 299 (KMSAS) match the 'KMSKS' region motif.

The protein belongs to the class-I aminoacyl-tRNA synthetase family. In terms of assembly, homodimer.

It localises to the cytoplasm. The enzyme catalyses tRNA(Trp) + L-tryptophan + ATP = L-tryptophyl-tRNA(Trp) + AMP + diphosphate + H(+). The chain is Tryptophan--tRNA ligase, cytoplasmic (WRS1) from Saccharomyces cerevisiae (strain ATCC 204508 / S288c) (Baker's yeast).